Here is a 225-residue protein sequence, read N- to C-terminus: Membrane protein (225 aa).

The Virion surface portion of the chain corresponds to 1 to 20; it reads MSNETNCTLDFEQSVELFKE. A helical membrane pass occupies residues 21–41; it reads YNLFITAFLLFLTIILQYGYA. Residues 42 to 51 lie on the Intravirion side of the membrane; sequence TRSKFIYILK. Residues 52–72 traverse the membrane as a helical segment; sequence MIVLWCFWPLNIAVGVISCIY. The Virion surface portion of the chain corresponds to 73–77; sequence PPNTG. A helical membrane pass occupies residues 78–98; that stretch reads GLVAAIILTVFACLSFVGYWI. Over 99 to 225 the chain is Intravirion; sequence QSIRLFKRCR…VATGGSSLYT (127 aa).

Belongs to the gammacoronaviruses M protein family. As to quaternary structure, homomultimer. Interacts with envelope E protein in the budding compartment of the host cell, which is located between endoplasmic reticulum and the Golgi complex. Forms a complex with HE and S proteins. Interacts with nucleocapsid N protein. This interaction probably participates in RNA packaging into the virus.

It is found in the virion membrane. It localises to the host Golgi apparatus membrane. Component of the viral envelope that plays a central role in virus morphogenesis and assembly via its interactions with other viral proteins. This is Membrane protein from Gallus gallus (Chicken).